A 518-amino-acid chain; its full sequence is Ribonuclease Y (518 aa).

The chain crosses the membrane as a helical span at residues 2–22 (GSIIISALLALVIGAVVGFFV). Residues 208-271 (TVSVVNLPND…ETARIALDKL (64 aa)) form the KH domain. The HD domain maps to 334-427 (VLKHSVEVAF…VAAADALSAA (94 aa)).

This sequence belongs to the RNase Y family.

It is found in the cell membrane. Endoribonuclease that initiates mRNA decay. This chain is Ribonuclease Y, found in Geobacillus kaustophilus (strain HTA426).